Here is a 132-residue protein sequence, read N- to C-terminus: Large ribosomal subunit protein bL20c (132 aa).

Belongs to the bacterial ribosomal protein bL20 family.

It is found in the plastid. Its subcellular location is the chloroplast. In terms of biological role, binds directly to 23S ribosomal RNA and is necessary for the in vitro assembly process of the 50S ribosomal subunit. It is not involved in the protein synthesizing functions of that subunit. The chain is Large ribosomal subunit protein bL20c from Coffea arabica (Arabian coffee).